The following is a 170-amino-acid chain: Shikimate kinase (170 aa).

15 to 20 contacts ATP; the sequence is GTGKTT. Residue T19 participates in Mg(2+) binding. Residues D37, R61, and G82 each coordinate substrate. R120 is an ATP binding site. Residue R138 coordinates substrate. An ATP-binding site is contributed by Q154.

The protein belongs to the shikimate kinase family. In terms of assembly, monomer. Mg(2+) serves as cofactor.

Its subcellular location is the cytoplasm. The enzyme catalyses shikimate + ATP = 3-phosphoshikimate + ADP + H(+). Its pathway is metabolic intermediate biosynthesis; chorismate biosynthesis; chorismate from D-erythrose 4-phosphate and phosphoenolpyruvate: step 5/7. Catalyzes the specific phosphorylation of the 3-hydroxyl group of shikimic acid using ATP as a cosubstrate. This is Shikimate kinase from Staphylococcus epidermidis (strain ATCC 35984 / DSM 28319 / BCRC 17069 / CCUG 31568 / BM 3577 / RP62A).